Here is a 383-residue protein sequence, read N- to C-terminus: tRNA-specific 2-thiouridylase MnmA (383 aa).

ATP is bound by residues Gly11–Ser18 and Met37. An interaction with target base in tRNA region spans residues Asn97–Asp99. Catalysis depends on Cys102, which acts as the Nucleophile. Cys102 and Cys200 are joined by a disulfide. An ATP-binding site is contributed by Gly127. The tract at residues Lys150–Gln152 is interaction with tRNA. Cys200 functions as the Cysteine persulfide intermediate in the catalytic mechanism. Residues Arg312 to Tyr313 are interaction with tRNA. Residues Ile361–Val383 form a disordered region.

Belongs to the MnmA/TRMU family.

Its subcellular location is the cytoplasm. The catalysed reaction is S-sulfanyl-L-cysteinyl-[protein] + uridine(34) in tRNA + AH2 + ATP = 2-thiouridine(34) in tRNA + L-cysteinyl-[protein] + A + AMP + diphosphate + H(+). Functionally, catalyzes the 2-thiolation of uridine at the wobble position (U34) of tRNA, leading to the formation of s(2)U34. In Halorhodospira halophila (strain DSM 244 / SL1) (Ectothiorhodospira halophila (strain DSM 244 / SL1)), this protein is tRNA-specific 2-thiouridylase MnmA.